A 208-amino-acid polypeptide reads, in one-letter code: Receptor expression-enhancing protein 6 (208 aa).

A run of 3 helical transmembrane segments spans residues 49–69 (GAFLLLGYGASLICNLIGFVY), 93–113 (WVIYGFFSVGEFFSDIFLHWF), and 115–135 (FYYVCKCLFLLWCMAPVSWNG). The tract at residues 187–208 (VGPAESEPRSLPSSAHTEPTVD) is disordered. Residues 197–208 (LPSSAHTEPTVD) show a composition bias toward polar residues.

It belongs to the DP1 family.

It is found in the endoplasmic reticulum membrane. The protein localises to the cytoplasmic vesicle. Its subcellular location is the clathrin-coated vesicle membrane. Functionally, required correct function and survival of retinal photoreceptors. Required for retinal development. In rod photoreceptors, facilitates stability and/or trafficking of guanylate cyclases and is required to maintain endoplasmic reticulum and mitochondrial homeostasis. May play a role in clathrin-coated intracellular vesicle trafficking of proteins from the endoplasmic reticulum to the retinal rod plasma membrane. In Danio rerio (Zebrafish), this protein is Receptor expression-enhancing protein 6.